We begin with the raw amino-acid sequence, 368 residues long: HECT-type ubiquitin ligase-interacting protein apyA (368 aa).

This sequence belongs to the arrestin family. In terms of assembly, interacts with hulA.

Its function is as follows. May be involved in signaling by recognizing appropriately phosphorylated substrates via its arrestin domains and then recruit a HECT-type ubiquitin ligase such as hulA, leading to ubiquitination of the substrate, providing a link between ubiquitination and phosphorylation in protein regulation and stability. The polypeptide is HECT-type ubiquitin ligase-interacting protein apyA (apyA) (Emericella nidulans (strain FGSC A4 / ATCC 38163 / CBS 112.46 / NRRL 194 / M139) (Aspergillus nidulans)).